Here is a 440-residue protein sequence, read N- to C-terminus: Xylose isomerase (440 aa).

Mg(2+) is bound by residues D307 and D309.

This sequence belongs to the xylose isomerase family. Homotetramer. Requires Mg(2+) as cofactor.

It is found in the cytoplasm. The enzyme catalyses alpha-D-xylose = alpha-D-xylulofuranose. This Pectobacterium carotovorum subsp. carotovorum (strain PC1) protein is Xylose isomerase.